Here is a 43-residue protein sequence, read N- to C-terminus: Protein PsbN (43 aa).

Residues 7–29 (VTIFLSGLLVSFTGYALYTAFGQ) traverse the membrane as a helical segment.

The protein belongs to the PsbN family.

Its subcellular location is the plastid. The protein localises to the chloroplast thylakoid membrane. Functionally, may play a role in photosystem I and II biogenesis. In Ipomoea purpurea (Common morning glory), this protein is Protein PsbN.